Consider the following 310-residue polypeptide: Ribonuclease Z (310 aa).

5 residues coordinate Zn(2+): His-61, His-63, Asp-65, His-66, and His-139. Asp-65 acts as the Proton acceptor in catalysis. The interval 150–175 (EDDRPGRFDRPKAEELGVPVGPKFGR) is disordered. The segment covering 153 to 164 (RPGRFDRPKAEE) has biased composition (basic and acidic residues). Residues Asp-210 and His-268 each contribute to the Zn(2+) site.

The protein belongs to the RNase Z family. In terms of assembly, homodimer. The cofactor is Zn(2+).

It carries out the reaction Endonucleolytic cleavage of RNA, removing extra 3' nucleotides from tRNA precursor, generating 3' termini of tRNAs. A 3'-hydroxy group is left at the tRNA terminus and a 5'-phosphoryl group is left at the trailer molecule.. Functionally, zinc phosphodiesterase, which displays some tRNA 3'-processing endonuclease activity. Probably involved in tRNA maturation, by removing a 3'-trailer from precursor tRNA. The chain is Ribonuclease Z from Halorubrum lacusprofundi (strain ATCC 49239 / DSM 5036 / JCM 8891 / ACAM 34).